We begin with the raw amino-acid sequence, 494 residues long: Probable cytosol aminopeptidase (494 aa).

The Mn(2+) site is built by lysine 260 and aspartate 265. Lysine 272 is a catalytic residue. Residues aspartate 283, aspartate 342, and glutamate 344 each coordinate Mn(2+). Residue arginine 346 is part of the active site.

Belongs to the peptidase M17 family. Mn(2+) serves as cofactor.

It is found in the cytoplasm. The enzyme catalyses Release of an N-terminal amino acid, Xaa-|-Yaa-, in which Xaa is preferably Leu, but may be other amino acids including Pro although not Arg or Lys, and Yaa may be Pro. Amino acid amides and methyl esters are also readily hydrolyzed, but rates on arylamides are exceedingly low.. The catalysed reaction is Release of an N-terminal amino acid, preferentially leucine, but not glutamic or aspartic acids.. Functionally, presumably involved in the processing and regular turnover of intracellular proteins. Catalyzes the removal of unsubstituted N-terminal amino acids from various peptides. The chain is Probable cytosol aminopeptidase from Bacillus thuringiensis subsp. konkukian (strain 97-27).